A 34-amino-acid polypeptide reads, in one-letter code: Photosystem II reaction center protein M (34 aa).

A helical transmembrane segment spans residues 5–25 (ILAFIATALFILVPTAFLLII).

This sequence belongs to the PsbM family. PSII is composed of 1 copy each of membrane proteins PsbA, PsbB, PsbC, PsbD, PsbE, PsbF, PsbH, PsbI, PsbJ, PsbK, PsbL, PsbM, PsbT, PsbX, PsbY, PsbZ, Psb30/Ycf12, at least 3 peripheral proteins of the oxygen-evolving complex and a large number of cofactors. It forms dimeric complexes.

It localises to the plastid. Its subcellular location is the chloroplast thylakoid membrane. One of the components of the core complex of photosystem II (PSII). PSII is a light-driven water:plastoquinone oxidoreductase that uses light energy to abstract electrons from H(2)O, generating O(2) and a proton gradient subsequently used for ATP formation. It consists of a core antenna complex that captures photons, and an electron transfer chain that converts photonic excitation into a charge separation. This subunit is found at the monomer-monomer interface. The protein is Photosystem II reaction center protein M of Buxus microphylla (Littleleaf boxwood).